A 229-amino-acid polypeptide reads, in one-letter code: MSSFKKILGLSSKSHKKSKKMGLPPPYDESCPMETQPSAPLSNDFFGMEDMDLYDKDSLRYEKFRFMLKMTVRSNKPFRSYDDVTAAVSQWDNSYIGMVGKRPFYKIIAVIGSSHLQATPAVLADLNQPEYYATLTGRCFLPHRLGLIPPMFNVQETFRKPFNIGLYKGTLDFTFTVSDDESNEKVPHVWDYMNPKYQSQIQQEGLKFGLILSKKATGTWVLDQLSPFK.

Low complexity predominate over residues 1 to 12 (MSSFKKILGLSS). Positions 1–35 (MSSFKKILGLSSKSHKKSKKMGLPPPYDESCPMET) are disordered. The dynamin binding signature appears at 2-4 (SSF). The short motif at 24–27 (PPPY) is the PPXY motif element. Residues 37-40 (PSAP) carry the PTAP/PSAP motif motif.

Belongs to the vesiculoviruses matrix protein family. In terms of assembly, homomultimer. Interacts with viral nucleocapsid; this interaction contributes to the virion assembly. Interacts with the viral envelope glycoprotein; this interaction contributes to the virion assembly. Interacts with host RAE1-NUP98 complex. Interacts with host NEDD4 and TSG101. Interacts with host dynamin. Interacts with host NDUFAF4; the interaction inhibits viral propagation and is independent of interferon activation. Interacts with host GTF2H5; the interaction may inhibit host transcription. Post-translationally, phosphorylated by host.

The protein resides in the virion. It localises to the host endomembrane system. It is found in the host nucleus membrane. The protein localises to the host nucleus. Its subcellular location is the host cytoplasm. Functionally, forms a double layer around the helical nucleocapsid, the inner matrix layer binding to the N helix and the outer matrix layer binding to the envelope glycoprotein. Plays a major role in assembly and budding of virion, by recruiting cellular partners of the ESCRT complexes that play a key role in releasing the budding particle from the host membrane. Condensates the ribonucleocapsid core during virus assembly. Inhibits the host mRNA nuclear export thereby inducing the shut off of cellular transcription and preventing the interferon signaling and the establishment of antiviral state in infected cells. This shutoff presumably inhibits interferon signaling and thus establishment of antiviral state in virus infected cells. Induces cell-rounding, cytoskeleton disorganization and apoptosis in infected cell. Inhibits host transcription, possibly through interaction with host DNA repair factor IIH/TFIIH GTF2H5 subunit. In Aedes (Bovine), this protein is Matrix protein (M).